The chain runs to 575 residues: Amyloid-beta A4 precursor protein-binding family A member 3 (575 aa).

Met-1 carries the post-translational modification N-acetylmethionine. Over residues 1–10 (MDFPTISRSP) the composition is skewed to polar residues. 2 disordered regions span residues 1-50 (MDFP…LSRM) and 118-211 (CEEC…GPCD). Ser-11 carries the phosphoserine modification. A compositionally biased stretch (acidic residues) spans 143-153 (EDPDEDSDSPE). Residues 156–184 (EGASAEQEGSRSSSSSPEPWLETVPLVTP) show a composition bias toward low complexity. Position 171 is a phosphoserine (Ser-171). The required for interaction with NECAB3 stretch occupies residues 215 to 364 (LLDGVIFGAR…QFLRESGIDP (150 aa)). Residues 217 to 381 (DGVIFGARYL…SPGACHLHNG (165 aa)) enclose the PID domain. Phosphoserine is present on Ser-372. 2 consecutive PDZ domains span residues 394 to 480 (EVHL…IVHC) and 485 to 560 (TAII…TMPA).

Binds to the cytoplasmic domain of amyloid protein (APP) in vivo. Interacts with HIF1AN (via N-terminus). Interacts with NECAB3; seems to mediate the interaction between NECAB3 and HIF1AN. Expressed in all tissues examined with lower levels in brain and testis.

It is found in the cytoplasm. The protein resides in the perinuclear region. May modulate processing of the amyloid-beta precursor protein (APP) and hence formation of APP-beta. May enhance the activity of HIF1A in macrophages by inhibiting the activity of HIF1AN. The sequence is that of Amyloid-beta A4 precursor protein-binding family A member 3 (APBA3) from Homo sapiens (Human).